The primary structure comprises 335 residues: UPF0353 protein Mjls_2492 (335 aa).

The next 2 helical transmembrane spans lie at 18 to 38 (WFFL…IVAL) and 67 to 87 (LPAI…AGPT). A VWFA domain is found at 98–294 (VVMLVIDVSQ…EQLREVYANL (197 aa)). A helical transmembrane segment spans residues 309 to 329 (VGWLRLGALVLALSALAALLL).

Belongs to the UPF0353 family.

The protein localises to the cell membrane. In Mycobacterium sp. (strain JLS), this protein is UPF0353 protein Mjls_2492.